We begin with the raw amino-acid sequence, 290 residues long: Protease HtpX homolog (290 aa).

A run of 2 helical transmembrane segments spans residues 4–24 (ILLF…VASL) and 39–59 (TALL…SLLI). Position 144 (histidine 144) interacts with Zn(2+). Glutamate 145 is a catalytic residue. A Zn(2+)-binding site is contributed by histidine 148. The next 2 membrane-spanning stretches (helical) occupy residues 159 to 179 (LIQG…GYAV) and 199 to 219 (VSTI…VAWF). Residue glutamate 224 coordinates Zn(2+).

This sequence belongs to the peptidase M48B family. Zn(2+) serves as cofactor.

It is found in the cell inner membrane. In Variovorax paradoxus (strain S110), this protein is Protease HtpX homolog.